Here is a 301-residue protein sequence, read N- to C-terminus: MHKKLAFFSGFVTLGMMLVLIMGGTVTKTDSGDGCGTDWPLCHGKLIPTNPSVETMIEYSHRVVSGIEGLLIIALAIWTFIAVKHRVDVKIFAFLAFIFMLIQSIIGAGAVIWQQSDAILALHFGISLVSFASLLILTILLFEGDREHQVVSRRLRSHLYGLSIYTMIVVYTGAYVRHLGATYACVGWPICEQEVWTFESYVQMGHRVMAGLLVLYTLYVLYLARKEMNRLIERGMMASLFFILLQVGTGAWIVLGGHATYVPLLHAFLITCYFGILSYLSYHAYRSTARQDGAQLKNMNG.

At 1–5 the chain is on the cytoplasmic side; that stretch reads MHKKL. The chain crosses the membrane as a helical span at residues 6–26; that stretch reads AFFSGFVTLGMMLVLIMGGTV. The Extracellular segment spans residues 27 to 62; that stretch reads TKTDSGDGCGTDWPLCHGKLIPTNPSVETMIEYSHR. Cys-35 and Cys-42 are oxidised to a cystine. The active site involves Glu-58. His-61 contacts heme o. The chain crosses the membrane as a helical span at residues 63–83; the sequence is VVSGIEGLLIIALAIWTFIAV. Topologically, residues 84-90 are cytoplasmic; the sequence is KHRVDVK. Residues 91–111 form a helical membrane-spanning segment; that stretch reads IFAFLAFIFMLIQSIIGAGAV. Topologically, residues 112–121 are extracellular; it reads IWQQSDAILA. A helical membrane pass occupies residues 122-142; that stretch reads LHFGISLVSFASLLILTILLF. His-123 lines the heme o pocket. Residues 143–158 are Cytoplasmic-facing; it reads EGDREHQVVSRRLRSH. A helical transmembrane segment spans residues 159 to 179; that stretch reads LYGLSIYTMIVVYTGAYVRHL. The Extracellular segment spans residues 180–203; it reads GATYACVGWPICEQEVWTFESYVQ. A disulfide bridge connects residues Cys-185 and Cys-191. Residues 204–224 form a helical membrane-spanning segment; it reads MGHRVMAGLLVLYTLYVLYLA. His-206 serves as a coordination point for heme b. The Cytoplasmic segment spans residues 225–234; that stretch reads RKEMNRLIER. The helical transmembrane segment at 235 to 255 threads the bilayer; that stretch reads GMMASLFFILLQVGTGAWIVL. At 256–259 the chain is on the extracellular side; the sequence is GGHA. Residues 260 to 280 form a helical membrane-spanning segment; sequence TYVPLLHAFLITCYFGILSYL. His-266 contacts heme b. The Cytoplasmic portion of the chain corresponds to 281–301; the sequence is SYHAYRSTARQDGAQLKNMNG.

This sequence belongs to the COX15/CtaA family. Type 1 subfamily. In terms of assembly, interacts with CtaB. Requires heme b as cofactor.

It is found in the cell membrane. It catalyses the reaction Fe(II)-heme o + 2 A + H2O = Fe(II)-heme a + 2 AH2. The protein operates within porphyrin-containing compound metabolism; heme A biosynthesis; heme A from heme O: step 1/1. Its function is as follows. Catalyzes the conversion of heme O to heme A by two successive hydroxylations of the methyl group at C8. The first hydroxylation forms heme I, the second hydroxylation results in an unstable dihydroxymethyl group, which spontaneously dehydrates, resulting in the formyl group of heme A. The sequence is that of Heme A synthase from Exiguobacterium sp. (strain ATCC BAA-1283 / AT1b).